The sequence spans 133 residues: Large-conductance mechanosensitive channel (133 aa).

2 helical membrane passes run 17 to 37 (AFIL…GGAF) and 73 to 93 (IGSF…LYLA).

The protein belongs to the MscL family. As to quaternary structure, homopentamer.

It localises to the cell inner membrane. Functionally, channel that opens in response to stretch forces in the membrane lipid bilayer. May participate in the regulation of osmotic pressure changes within the cell. This chain is Large-conductance mechanosensitive channel, found in Synechococcus elongatus (strain ATCC 33912 / PCC 7942 / FACHB-805) (Anacystis nidulans R2).